We begin with the raw amino-acid sequence, 225 residues long: Small ribosomal subunit protein uS3 (225 aa).

The KH type-2 domain maps to 16 to 85; that stretch reads VCEYVVKETE…TPQIEVKDVK (70 aa). The tract at residues 202–225 is disordered; it reads EVGTESKADQTDVEGRETGNAEES. Residues 205-225 show a composition bias toward basic and acidic residues; that stretch reads TESKADQTDVEGRETGNAEES.

This sequence belongs to the universal ribosomal protein uS3 family. In terms of assembly, part of the 30S ribosomal subunit.

Functionally, binds the lower part of the 30S subunit head. The protein is Small ribosomal subunit protein uS3 of Thermoplasma acidophilum (strain ATCC 25905 / DSM 1728 / JCM 9062 / NBRC 15155 / AMRC-C165).